Here is a 100-residue protein sequence, read N- to C-terminus: Large ribosomal subunit protein bL21 (100 aa).

It belongs to the bacterial ribosomal protein bL21 family. As to quaternary structure, part of the 50S ribosomal subunit. Contacts protein L20.

This protein binds to 23S rRNA in the presence of protein L20. The chain is Large ribosomal subunit protein bL21 from Mycoplasma mycoides subsp. mycoides SC (strain CCUG 32753 / NCTC 10114 / PG1).